The sequence spans 1034 residues: MAVKNPFGFTTGPVTFWLIVVYAAFLIPLVWIHESVPAVPSSSKNPYPQLNVTEAWHDLTHITRKYHPYNSRANDEVGAYFMKRIEEILVRNKVEYTKEKDAGGVIWPQEAYDAPAPAKRDVQRRDSKGPAVTIFDDTISNTTYLGTSGSFNQAGAYGTYFEGTNKLVYIRGTLDEDGEWWNGKRDPRKIGQGGVLVNAHYDSVSSGYGATDDGMGCVSILQILNHYTSPGHQPMRGIVLLLNNGEEDGLYGAKVYHYSPLYYFTTSFVNLEGAGAGGRAILFRTTDLEVTKGYEGAPHPFGSVVAADGFKLGAIRSETDYKVWTESYGQRGLDIAFYRPRARYHTNQDDTRHASQESLWHMLSNSLAAVDNLQHTTGYFSGSRNDGDKKKVASGSGTDGVWFDMFGTGFAILELRGLFAWTLTLLIVSPLVLALVTYILSRKDKYYFFSRKVTADEDDEPVSVGGWKGFFRFPFALVLSASITVLSAFLIRRVNPHIIYSSPYAVWAMTLSLFFLVFWTIAKGASVVRPSALQRGYAHIWLFVISWVILVAVTAAADRFKIASGYPFAFFHSAVFVSALISLCDLFALPSKQEFARNAHNDQQTRDNISEVPNSDALISSRHSHVEDDVAEEPTETTPLRSGENGNGNNGTIRTTFATTYRRSLSAIMRTPDEEENKETEQQPYDHEQQWSANLPSWTWFFQLLLLAPITITVFLQIALFIVSAIHSAAADGNDPILVYAAIAAFSIIILLPATPFIHRASFYLPLFLLLVFFVTLIYNLVAFPFSAENRLKVRFQQTLDLDANTSVISITGLEKYTRKMIAELPSGAGQPVNCTPGYGLTSDCRYNGAAVMPNLPQFTHALPANVSKGRYANLVTVNISRSDSSSKLEFGIDAAESKVCNLAFDTPVSFNVRGSAGIDPIFSRPTEQGVRMLTLWRRDASIPWVVDVEPIKTKAVPAGVLAKSSDSDAGAVHEDLRVRKSAELSGTIACQWSDANVLGTIPAFDEALQFSPDWIAVTKASVGLVEGRKKFRA.

Residues 1–11 (MAVKNPFGFTT) lie on the Cytoplasmic side of the membrane. The helical transmembrane segment at 12-32 (GPVTFWLIVVYAAFLIPLVWI) threads the bilayer. Over 33–418 (HESVPAVPSS…GFAILELRGL (386 aa)) the chain is Vacuolar. N-linked (GlcNAc...) asparagine glycans are attached at residues Asn51 and Asn141. The Zn(2+) site is built by His200 and Asp212. Residue Glu246 is the Proton acceptor of the active site. Residues Glu247, Glu272, and His345 each coordinate Zn(2+). A helical membrane pass occupies residues 419–439 (FAWTLTLLIVSPLVLALVTYI). Residues 440 to 470 (LSRKDKYYFFSRKVTADEDDEPVSVGGWKGF) lie on the Cytoplasmic side of the membrane. Residues 471-491 (FRFPFALVLSASITVLSAFLI) traverse the membrane as a helical segment. Residues 492–497 (RRVNPH) lie on the Vacuolar side of the membrane. The chain crosses the membrane as a helical span at residues 498 to 518 (IIYSSPYAVWAMTLSLFFLVF). At 519 to 536 (WTIAKGASVVRPSALQRG) the chain is on the cytoplasmic side. A helical transmembrane segment spans residues 537-557 (YAHIWLFVISWVILVAVTAAA). Residues 558-567 (DRFKIASGYP) are Vacuolar-facing. Residues 568–588 (FAFFHSAVFVSALISLCDLFA) form a helical membrane-spanning segment. Residues 589–703 (LPSKQEFARN…NLPSWTWFFQ (115 aa)) lie on the Cytoplasmic side of the membrane. The segment at 623-653 (HSHVEDDVAEEPTETTPLRSGENGNGNNGTI) is disordered. A helical membrane pass occupies residues 704–724 (LLLLAPITITVFLQIALFIVS). Residues 725 to 736 (AIHSAAADGNDP) lie on the Vacuolar side of the membrane. The helical transmembrane segment at 737-757 (ILVYAAIAAFSIIILLPATPF) threads the bilayer. The Cytoplasmic segment spans residues 758–762 (IHRAS). Residues 763-783 (FYLPLFLLLVFFVTLIYNLVA) form a helical membrane-spanning segment. The Vacuolar portion of the chain corresponds to 784–1034 (FPFSAENRLK…LVEGRKKFRA (251 aa)). Asn805, Asn866, and Asn879 each carry an N-linked (GlcNAc...) asparagine glycan.

It belongs to the peptidase M28 family. The cofactor is Zn(2+).

The protein localises to the vacuole membrane. May be involved in vacuolar sorting and osmoregulation. This chain is Vacuolar membrane protease, found in Colletotrichum graminicola (strain M1.001 / M2 / FGSC 10212) (Maize anthracnose fungus).